A 539-amino-acid polypeptide reads, in one-letter code: Carotene epsilon-monooxygenase, chloroplastic (539 aa).

The N-terminal 36 residues, 1-36 (MESSLFSPSSSSYSSLFTAKPTRLLSPKPKFTFSIR), are a transit peptide targeting the chloroplast. Cys-487 is a binding site for heme.

Belongs to the cytochrome P450 family. Heme is required as a cofactor.

It is found in the plastid. The protein resides in the chloroplast. It carries out the reaction alpha-carotene + reduced [NADPH--hemoprotein reductase] + O2 = alpha-cryptoxanthin + oxidized [NADPH--hemoprotein reductase] + H2O + H(+). The catalysed reaction is zeinoxanthin + reduced [NADPH--hemoprotein reductase] + O2 = lutein + oxidized [NADPH--hemoprotein reductase] + H2O + H(+). Its function is as follows. Heme-containing cytochrome P450 involved in the biosynthesis of xanthophylls. Specific for epsilon- and beta-ring hydroxylation of alpha-carotene. Has only a low activity toward the beta-rings of beta-carotene. The preferred substrate in planta is not alpha-carotene but the epsilon-ring of zeinoxanthin. Possesses a major beta-carotene hydroxylase activity in planta when depleted in its preferred substrate alpha-carotene. The chain is Carotene epsilon-monooxygenase, chloroplastic (CYP97C1) from Arabidopsis thaliana (Mouse-ear cress).